We begin with the raw amino-acid sequence, 263 residues long: Putative replication protein PDa0002 (263 aa).

In Xylella fastidiosa (strain Temecula1 / ATCC 700964), this protein is Putative replication protein PDa0002.